The chain runs to 904 residues: Nitrate reductase [NADH] 1 (904 aa).

Polar residues-rich tracts occupy residues 1–10 and 39–50; these read MAASVENRQF and STNFQKKPNSTI. Residues 1–65 are disordered; it reads MAASVENRQF…SSEDDDDDDE (65 aa). The span at 56–65 shows a compositional bias: acidic residues; it reads SSEDDDDDDE. A Mo-molybdopterin-binding site is contributed by C183. Positions 531–606 constitute a Cytochrome b5 heme-binding domain; that stretch reads SKMYSMSEVR…LEEFRIGELL (76 aa). Heme is bound by residues H566 and H589. Residues 647 to 759 enclose the FAD-binding FR-type domain; the sequence is REKIPCKLID…KGPLGHIEYQ (113 aa). Residues 699 to 702, 716 to 720, F721, F728, 733 to 735, and T786 each bind FAD; these read RAYT, VVKIY, and QMS.

The protein belongs to the nitrate reductase family. Homodimer. FAD serves as cofactor. It depends on heme as a cofactor. The cofactor is Mo-molybdopterin.

It catalyses the reaction nitrite + NAD(+) + H2O = nitrate + NADH + H(+). With respect to regulation, regulated by the nitrogen source and controlled by the circadian rhythm. Nitrate reductase is a key enzyme involved in the first step of nitrate assimilation in plants, fungi and bacteria. This is Nitrate reductase [NADH] 1 (NIA1) from Nicotiana tabacum (Common tobacco).